A 295-amino-acid polypeptide reads, in one-letter code: Putative sugar uptake protein YxfA (295 aa).

10 helical membrane passes run 4–26, 33–50, 54–72, 85–107, 117–135, 156–178, 188–206, 213–235, 241–263, and 270–291; these read VLLA…KFGG, LGMT…FLFR, LTWQ…WAIG, VSVA…GVFA, FILG…YFSA, ALTY…AVLW, IILP…MGRF, YVYQ…LMAA, AIAF…LFLG, and ELVY…LAIV.

It belongs to the GRP transporter (TC 2.A.7.5) family.

It localises to the cell membrane. The protein is Putative sugar uptake protein YxfA (yxfA) of Lactococcus lactis subsp. lactis (strain IL1403) (Streptococcus lactis).